The following is a 605-amino-acid chain: Protein Spindly (605 aa).

An N-acetylmethionine modification is found at Met-1. The stretch at 2–442 forms a coiled coil; the sequence is EADIITNLRC…ELKLKYEPEE (441 aa). A phosphoserine mark is found at Ser-513, Ser-515, and Ser-555. The tract at residues 544–580 is disordered; sequence ALSERSGNTPNSPRLAAESKLQTEVKEGKETSSKLEK. The segment covering 564-580 has biased composition (basic and acidic residues); sequence LQTEVKEGKETSSKLEK.

Belongs to the Spindly family. As to quaternary structure, interacts with KNTC1 and ZW10. These interactions appear weak and may be transient or indirect. Interacts with dynein intermediate chain and dynactin (DCTN1). Interacts with the catalytically active form of USP45. Post-translationally, monoubiquitinated with'Lys-48' linkage. Deubiquitinated by USP45.

It localises to the cytoplasm. The protein localises to the cytoskeleton. The protein resides in the microtubule organizing center. Its subcellular location is the centrosome. It is found in the chromosome. It localises to the centromere. The protein localises to the kinetochore. The protein resides in the nucleus. Its subcellular location is the spindle pole. In terms of biological role, required for the localization of dynein and dynactin to the mitotic kintochore. Dynein is believed to control the initial lateral interaction between the kinetochore and spindle microtubules and to facilitate the subsequent formation of end-on kinetochore-microtubule attachments mediated by the NDC80 complex. Also required for correct spindle orientation. Does not appear to be required for the removal of spindle assembly checkpoint (SAC) proteins from the kinetochore upon bipolar spindle attachment. Acts as an adapter protein linking the dynein motor complex to various cargos and converts dynein from a non-processive to a highly processive motor in the presence of dynactin. Facilitates the interaction between dynein and dynactin and activates dynein processivity (the ability to move along a microtubule for a long distance without falling off the track). Plays a role in cell migration. The polypeptide is Protein Spindly (Homo sapiens (Human)).